The sequence spans 222 residues: 7-cyano-7-deazaguanine synthase (222 aa).

14–24 (FSGGQDSTTCL) contacts ATP. Zn(2+) contacts are provided by cysteine 190, cysteine 199, cysteine 202, and cysteine 205.

It belongs to the QueC family. Homodimer. The cofactor is Zn(2+).

It catalyses the reaction 7-carboxy-7-deazaguanine + NH4(+) + ATP = 7-cyano-7-deazaguanine + ADP + phosphate + H2O + H(+). It participates in purine metabolism; 7-cyano-7-deazaguanine biosynthesis. Functionally, catalyzes the ATP-dependent conversion of 7-carboxy-7-deazaguanine (CDG) to 7-cyano-7-deazaguanine (preQ(0)). This Staphylococcus aureus (strain bovine RF122 / ET3-1) protein is 7-cyano-7-deazaguanine synthase.